Here is a 613-residue protein sequence, read N- to C-terminus: Kelch-like protein 36 (613 aa).

One can recognise a BTB domain in the interval 45 to 112; it reads CDVVLVVEEQ…LYSSELELDG (68 aa). In terms of domain architecture, BACK spans 147 to 249; sequence YLYLQELASI…PEDILLQRVK (103 aa). Kelch repeat units lie at residues 294 to 343, 344 to 395, 396 to 442, 444 to 491, 492 to 544, and 545 to 593; these read CLLF…VLGG, FIFV…SIED, MLVA…IYKD, VYIS…SLGD, SIYS…VWQG, and RIYI…VCAL.

As to quaternary structure, interacts with CUL3.

Its pathway is protein modification; protein ubiquitination. Its function is as follows. Probable substrate-specific adapter of an E3 ubiquitin-protein ligase complex which mediates the ubiquitination and subsequent proteasomal degradation of target proteins. The protein is Kelch-like protein 36 (Klhl36) of Rattus norvegicus (Rat).